The primary structure comprises 71 residues: UPF0352 protein Ssed_1809 (71 aa).

It belongs to the UPF0352 family.

This is UPF0352 protein Ssed_1809 from Shewanella sediminis (strain HAW-EB3).